A 508-amino-acid polypeptide reads, in one-letter code: Histidine ammonia-lyase (508 aa).

The segment at residues 143 to 145 (ASG) is a cross-link (5-imidazolinone (Ala-Gly)). Position 144 is a 2,3-didehydroalanine (Ser) (Ser-144).

Belongs to the PAL/histidase family. Post-translationally, contains an active site 4-methylidene-imidazol-5-one (MIO), which is formed autocatalytically by cyclization and dehydration of residues Ala-Ser-Gly.

The protein resides in the cytoplasm. It catalyses the reaction L-histidine = trans-urocanate + NH4(+). It functions in the pathway amino-acid degradation; L-histidine degradation into L-glutamate; N-formimidoyl-L-glutamate from L-histidine: step 1/3. This chain is Histidine ammonia-lyase, found in Klebsiella pneumoniae subsp. pneumoniae (strain ATCC 700721 / MGH 78578).